Consider the following 208-residue polypeptide: Imidazoleglycerol-phosphate dehydratase (208 aa).

This sequence belongs to the imidazoleglycerol-phosphate dehydratase family.

The protein localises to the cytoplasm. The catalysed reaction is D-erythro-1-(imidazol-4-yl)glycerol 3-phosphate = 3-(imidazol-4-yl)-2-oxopropyl phosphate + H2O. Its pathway is amino-acid biosynthesis; L-histidine biosynthesis; L-histidine from 5-phospho-alpha-D-ribose 1-diphosphate: step 6/9. This is Imidazoleglycerol-phosphate dehydratase from Pseudarthrobacter chlorophenolicus (strain ATCC 700700 / DSM 12829 / CIP 107037 / JCM 12360 / KCTC 9906 / NCIMB 13794 / A6) (Arthrobacter chlorophenolicus).